A 396-amino-acid polypeptide reads, in one-letter code: Mevalonate kinase (396 aa).

ATP-binding positions include Lys13, Asn55, Ser135, and Gly140–Ser146. Ser146 (proton donor) is an active-site residue. Residues Ser146 and Glu193 each contribute to the Mg(2+) site. Asp204 acts as the Proton acceptor in catalysis.

Belongs to the GHMP kinase family. Mevalonate kinase subfamily. Homodimer. The cofactor is Mg(2+).

The protein resides in the cytoplasm. Its subcellular location is the peroxisome. It carries out the reaction (R)-mevalonate + ATP = (R)-5-phosphomevalonate + ADP + H(+). It participates in isoprenoid biosynthesis; isopentenyl diphosphate biosynthesis via mevalonate pathway; isopentenyl diphosphate from (R)-mevalonate: step 1/3. Its activity is regulated as follows. Farnesyl pyrophosphate and geranyl pyrophosphate inhibit mevalonate kinase activity by binding competitively at the ATP-binding sites. In terms of biological role, catalyzes the phosphorylation of mevalonate to mevalonate 5-phosphate, a key step in isoprenoid and cholesterol biosynthesis. The polypeptide is Mevalonate kinase (Homo sapiens (Human)).